The sequence spans 138 residues: Protein FAM136A (138 aa).

Ala2 is modified (N-acetylalanine). Thr124 and Thr126 each carry phosphothreonine.

The protein belongs to the FAM136 family.

This Mus musculus (Mouse) protein is Protein FAM136A (Fam136a).